The following is an 804-amino-acid chain: Elongation factor G, mitochondrial (804 aa).

The transit peptide at 1–63 (MSMHRVARAV…RHFSQSPIIR (63 aa)) directs the protein to the mitochondrion. In terms of domain architecture, tr-type G spans 99–385 (RRVRNIGIAA…AVCDYLPNPA (287 aa)). GTP-binding positions include 108-115 (AHIDSGKT), 183-187 (DTPGH), and 237-240 (NKMD).

It belongs to the TRAFAC class translation factor GTPase superfamily. Classic translation factor GTPase family. EF-G/EF-2 subfamily.

Its subcellular location is the mitochondrion. The protein operates within protein biosynthesis; polypeptide chain elongation. In terms of biological role, mitochondrial GTPase that catalyzes the GTP-dependent ribosomal translocation step during translation elongation. During this step, the ribosome changes from the pre-translocational (PRE) to the post-translocational (POST) state as the newly formed A-site-bound peptidyl-tRNA and P-site-bound deacylated tRNA move to the P and E sites, respectively. Catalyzes the coordinated movement of the two tRNA molecules, the mRNA and conformational changes in the ribosome. The chain is Elongation factor G, mitochondrial (mef1) from Botryotinia fuckeliana (strain B05.10) (Noble rot fungus).